Here is a 362-residue protein sequence, read N- to C-terminus: Red-sensitive opsin (362 aa).

Residues 1 to 49 (MAAWEAAFAARRRHEEEDTTRDSVFTYTNSNNTRGPFEGPNYHIAPRWV) lie on the Extracellular side of the membrane. N-linked (GlcNAc...) asparagine glycosylation occurs at Asn-31. The helical transmembrane segment at 50–74 (YNLTSVWMIFVVAASVFTNGLVLVA) threads the bilayer. Topologically, residues 75–86 (TWKFKKLRHPLN) are cytoplasmic. A helical membrane pass occupies residues 87-112 (WILVNLAVADLGETVIASTISVINQI). Topologically, residues 113–126 (SGYFILGHPMCVVE) are extracellular. A disulfide bond links Cys-123 and Cys-200. The helical transmembrane segment at 127–146 (GYTVSACGITALWSLAIISW) threads the bilayer. Residues 147–165 (ERWFVVCKPFGNIKFDGKL) lie on the Cytoplasmic side of the membrane. The helical transmembrane segment at 166–189 (AVAGILFSWLWSCAWTAPPIFGWS) threads the bilayer. Residues 190–215 (RYWPHGLKTSCGPDVFSGSSDPGVQS) are Extracellular-facing. The chain crosses the membrane as a helical span at residues 216–243 (YMVVLMVTCCFFPLAIIILCYLQVWLAI). The Cytoplasmic segment spans residues 244–265 (RAVAAQQKESESTQKAEKEVSR). The chain crosses the membrane as a helical span at residues 266–289 (MVVVMIVAYCFCWGPYTFFACFAA). At 290 to 297 (ANPGYAFH) the chain is on the extracellular side. The chain crosses the membrane as a helical span at residues 298–322 (PLAAALPAYFAKSATIYNPIIYVFM). Lys-309 carries the N6-(retinylidene)lysine modification. Residues 323–362 (NRQFRNCILQLFGKKVDDGSEVSTSRTEVSSVSNSSVSPA) are Cytoplasmic-facing.

Belongs to the G-protein coupled receptor 1 family. Opsin subfamily. Phosphorylated on some or all of the serine and threonine residues present in the C-terminal region. As to expression, the color pigments are found in the cone photoreceptor cells.

The protein resides in the membrane. Functionally, visual pigments are the light-absorbing molecules that mediate vision. They consist of an apoprotein, opsin, covalently linked to cis-retinal. The sequence is that of Red-sensitive opsin from Gallus gallus (Chicken).